A 291-amino-acid polypeptide reads, in one-letter code: 3-hydroxy-5-phosphonooxypentane-2,4-dione thiolase (291 aa).

Lysine 203 (schiff-base intermediate with substrate) is an active-site residue.

This sequence belongs to the DeoC/FbaB aldolase family. Homodecamer.

It is found in the cytoplasm. The catalysed reaction is dihydroxyacetone phosphate + acetyl-CoA = 3-hydroxy-2,4-dioxopentyl phosphate + CoA. Functionally, involved in the degradation of phospho-AI-2, thereby terminating induction of the lsr operon and closing the AI-2 signaling cycle. Catalyzes the transfer of an acetyl moiety from 3-hydroxy-5-phosphonooxypentane-2,4-dione to CoA to form glycerone phosphate and acetyl-CoA. This chain is 3-hydroxy-5-phosphonooxypentane-2,4-dione thiolase, found in Salmonella paratyphi A (strain ATCC 9150 / SARB42).